The sequence spans 126 residues: Precursor of CEP2 (126 aa).

An N-terminal signal peptide occupies residues 1 to 19 (MKLFIITVVTILTISRVFD). Residues 20 to 80 (KTPATTEARK…ENNLKNRFIN (61 aa)) constitute a propeptide that is removed on maturation. 2 positions are modified to hydroxyproline: Pro-84 and Pro-87. Positions 96–105 (PRVLNNKFTN) are excised as a propeptide. Hydroxyproline is present on residues Pro-109, Pro-112, and Pro-116. The propeptide occupies 121-126 (PGVVNV).

This sequence belongs to the C-terminally encoded plant signaling peptide (CEP) family. As to quaternary structure, interacts with CEP receptors (e.g. CEPR1 and CEPR2). Post-translationally, the mature small signaling peptide is generated by proteolytic processing of the longer precursor. Mostly expressed in roots. Present in cotyledons, shoot apical meristem (SAM), leaves, inflorescence stems and flowers.

It is found in the secreted. It localises to the extracellular space. The protein localises to the apoplast. In terms of biological role, extracellular signaling peptide that represses primary root growth rate. Negatively regulates the number of leaves and flowering, and modulates leaf morphology. Regulates systemic nitrogen (N)-demand signaling. Mediates up-regulation of genes involved in N uptake and assimilation pathways. In Arabidopsis thaliana (Mouse-ear cress), this protein is Precursor of CEP2.